The primary structure comprises 481 residues: Inosine-5'-monophosphate dehydrogenase (481 aa).

2 CBS domains span residues 92-148 (VIND…SKKV) and 152-209 (MTKM…PEAN). Residues aspartate 244 and 293-295 (GIG) each bind NAD(+). The K(+) site is built by glycine 295 and glycine 297. Residue serine 298 participates in IMP binding. Cysteine 300 contributes to the K(+) binding site. Cysteine 300 serves as the catalytic Thioimidate intermediate. Residues 333–335 (DGG), 356–357 (GS), and 380–384 (YRGMG) contribute to the IMP site. Catalysis depends on arginine 396, which acts as the Proton acceptor. An IMP-binding site is contributed by glutamate 410. Glutamate 464, serine 465, and histidine 466 together coordinate K(+).

This sequence belongs to the IMPDH/GMPR family. Homotetramer. The cofactor is K(+).

It catalyses the reaction IMP + NAD(+) + H2O = XMP + NADH + H(+). The protein operates within purine metabolism; XMP biosynthesis via de novo pathway; XMP from IMP: step 1/1. Its activity is regulated as follows. Mycophenolic acid (MPA) is a non-competitive inhibitor that prevents formation of the closed enzyme conformation by binding to the same site as the amobile flap. In contrast, mizoribine monophosphate (MZP) is a competitive inhibitor that induces the closed conformation. MPA is a potent inhibitor of mammalian IMPDHs but a poor inhibitor of the bacterial enzymes. MZP is a more potent inhibitor of bacterial IMPDH. Functionally, catalyzes the conversion of inosine 5'-phosphate (IMP) to xanthosine 5'-phosphate (XMP), the first committed and rate-limiting step in the de novo synthesis of guanine nucleotides, and therefore plays an important role in the regulation of cell growth. This is Inosine-5'-monophosphate dehydrogenase from Helicobacter pylori (strain J99 / ATCC 700824) (Campylobacter pylori J99).